Consider the following 216-residue polypeptide: Ribosome maturation factor RimP (216 aa).

The protein belongs to the RimP family.

The protein resides in the cytoplasm. Functionally, required for maturation of 30S ribosomal subunits. The protein is Ribosome maturation factor RimP of Bartonella quintana (strain Toulouse) (Rochalimaea quintana).